We begin with the raw amino-acid sequence, 238 residues long: Flagellar L-ring protein (238 aa).

A signal peptide spans 1–23 (MIKLFICQKKYYLTAIFLLTIQS). Residue cysteine 24 is the site of N-palmitoyl cysteine attachment. Cysteine 24 carries the S-diacylglycerol cysteine lipid modification.

The protein belongs to the FlgH family. The basal body constitutes a major portion of the flagellar organelle and consists of four rings (L,P,S, and M) mounted on a central rod.

Its subcellular location is the cell outer membrane. It is found in the bacterial flagellum basal body. Functionally, assembles around the rod to form the L-ring and probably protects the motor/basal body from shearing forces during rotation. The polypeptide is Flagellar L-ring protein (Buchnera aphidicola subsp. Acyrthosiphon pisum (strain 5A)).